The chain runs to 1249 residues: MPKTLTESEVEATFAKLKAADPDRKVDIIQFFGLQLEDVEELPASVIDPFLLILPPLIRSPHSLLLSSVLSSFLPYFLPLIPKHPTTHLRLALLQVLPALLEKLNDAKERIHSAAGNAIVILGELSWEAEPPIPASNLNSSGSLKAGSLSSSTATKSKPHETLPHLWERHLKDVLQGKAWRSKVEGMKVLTKMRSKEGAKMGLKAWLGVLVDLLEDGDGNVRDQARETVVELLSPPSTPPAARSEFKRLLVARNVRKTIADDIITRILSGEGSDRSTPAVMNSELGKEEGASRSGAAAPAHSQADDVDIVYVASPQDLEREFHSMLPFFEGKETEENWAPRERSIVRIRGMMKGQAHVKYQAAFIAGLKGGIVEGMSKTVLSLRTTVAQQSCYLLKELPEGLGAAFDNFVEFLLPILGKMSGFTKKLIADRSQTAVTSIITHTTVHPRIFINHISSGIQEKNVQIRAYSVNHLKTFLIVHASHAKHQIEATPGLSDTLDAAFRKALADVNPGVREVTRQAFWRYHEVWRSKAEVLMNSLDGQARKQLEKANPRTAASPMPSYASSSSTGAPSSANTKPPSKKMDLKAMLAERRRAVKEAGKQAQETNAGSPRVVSNPVFASPGVQHASITGLPRSSSAVGIARHVETSSPSPVRSPTPSSSATRIRPSPSPERIQSPIQTKIEIDSPLRSRYTSLTPDLARSPPKSPSPSLSPSLGLGESPLRQVLTYPAANGRHSVGEGKRAIPELVEVADNGAEHEVDELTLKEGQKTRDDGNTDQELPPTVQEEVDQVEQSQQFESEPRLEHPEPQQGNTFSTSTSGRVPSTPARSIATGTTASLPNSRNGNIKGEKIISSRLNPEAFQTPLNPKTSALRSSSAIRTPAWKDSPRPEAVTPQMMQKLKERRHERSWWVKRQELLEKASPLKPLTPSPSFAILPDIEALELGAPTLKNLQKIALFCSSHPVRPEPTAEQDEEEKRAFEEEKRVWTGLFDRVMNGVVDFLRPDKDKELLEQGLVVLWEIVQHQWPLVDDTQRLCHGLFRLRESSDAVVLESTNALISLLVQISDPMLLLCNLRSSLDRFLTKHPAPPSSSADNSDPMTSALSQLSLSSSKESPEKRTRNSGYLFGLTSIGMCVLRLSAPVIVSEGPKLGQIVMEAINDPSSIIRQAAHSLLLAIQCVTHDSRKTLAFVPAMSQGQKDLAVYYMAQNGVLEQIGLHKKATSEGEKGREGDRDNMTGELAGLMSRGVIRE.

Low complexity-rich tracts occupy residues 138-156 (LNSS…TATK) and 555-574 (AASP…PSSA). 6 disordered regions span residues 138–161 (LNSS…KPHE), 545–619 (KQLE…NPVF), 644–718 (HVET…LGLG), 755–846 (AEHE…NGNI), 860–891 (AFQT…RPEA), and 1084–1118 (HPAP…EKRT). Residues 581-600 (KKMDLKAMLAERRRAVKEAG) show a composition bias toward basic and acidic residues. Composition is skewed to low complexity over residues 647–667 (TSSP…RIRP) and 708–718 (SPSLSPSLGLG). Over residues 755 to 774 (AEHEVDELTLKEGQKTRDDG) the composition is skewed to basic and acidic residues. Polar residues-rich tracts occupy residues 809 to 822 (QQGN…SGRV), 831 to 844 (ATGT…SRNG), and 863 to 878 (TPLN…SSAI). The segment covering 1089 to 1111 (SSSADNSDPMTSALSQLSLSSSK) has biased composition (low complexity).

Belongs to the CLASP family. Interacts with microtubules.

It is found in the cytoplasm. Its subcellular location is the cytoskeleton. The protein localises to the nucleus. The protein resides in the spindle. Its function is as follows. Microtubule binding protein that promotes the stabilization of dynamic microtubules. Required for mitotic spindle formation. This Cryptococcus neoformans var. neoformans serotype D (strain JEC21 / ATCC MYA-565) (Filobasidiella neoformans) protein is Protein STU1 (STU1).